A 188-amino-acid polypeptide reads, in one-letter code: Insulin-like peptide INSL6 (188 aa).

The first 22 residues, 1-22, serve as a signal peptide directing secretion; that stretch reads MKQLCCSCLLWLGLLLAPFSQE. 3 cysteine pairs are disulfide-bonded: cysteine 33–cysteine 169, cysteine 45–cysteine 182, and cysteine 168–cysteine 173. A propeptide spans 53 to 158 (connecting peptide); the sequence is FSMEEQSPMT…SGLFWGNHPQ (106 aa).

The protein belongs to the insulin family. Testis and prostate specific.

Its subcellular location is the secreted. May have a role in sperm development and fertilization. The chain is Insulin-like peptide INSL6 (Insl6) from Rattus norvegicus (Rat).